The chain runs to 782 residues: Phosphoribosylformylglycinamidine synthase subunit PurL (782 aa).

Histidine 48 is a catalytic residue. ATP-binding residues include tyrosine 51 and lysine 90. A Mg(2+)-binding site is contributed by glutamate 92. Substrate-binding positions include 93–96 (SHNH) and arginine 115. Residue histidine 94 is the Proton acceptor of the active site. Aspartate 116 is a Mg(2+) binding site. Glutamine 239 serves as a coordination point for substrate. Residue aspartate 267 coordinates Mg(2+). 311 to 313 (ESQ) serves as a coordination point for substrate. Positions 525 and 562 each coordinate ATP. Asparagine 563 serves as a coordination point for Mg(2+). A substrate-binding site is contributed by serine 565.

Belongs to the FGAMS family. As to quaternary structure, monomer. Part of the FGAM synthase complex composed of 1 PurL, 1 PurQ and 2 PurS subunits.

The protein resides in the cytoplasm. The catalysed reaction is N(2)-formyl-N(1)-(5-phospho-beta-D-ribosyl)glycinamide + L-glutamine + ATP + H2O = 2-formamido-N(1)-(5-O-phospho-beta-D-ribosyl)acetamidine + L-glutamate + ADP + phosphate + H(+). It participates in purine metabolism; IMP biosynthesis via de novo pathway; 5-amino-1-(5-phospho-D-ribosyl)imidazole from N(2)-formyl-N(1)-(5-phospho-D-ribosyl)glycinamide: step 1/2. In terms of biological role, part of the phosphoribosylformylglycinamidine synthase complex involved in the purines biosynthetic pathway. Catalyzes the ATP-dependent conversion of formylglycinamide ribonucleotide (FGAR) and glutamine to yield formylglycinamidine ribonucleotide (FGAM) and glutamate. The FGAM synthase complex is composed of three subunits. PurQ produces an ammonia molecule by converting glutamine to glutamate. PurL transfers the ammonia molecule to FGAR to form FGAM in an ATP-dependent manner. PurS interacts with PurQ and PurL and is thought to assist in the transfer of the ammonia molecule from PurQ to PurL. This chain is Phosphoribosylformylglycinamidine synthase subunit PurL, found in Nostoc sp. (strain PCC 7120 / SAG 25.82 / UTEX 2576).